Here is a 339-residue protein sequence, read N- to C-terminus: UDP-N-acetylenolpyruvoylglucosamine reductase (339 aa).

The FAD-binding PCMH-type domain maps to 16 to 188; it reads GIAATARYYS…LQVTLRLNKQ (173 aa). The active site involves Arg164. Residue Ser238 is the Proton donor of the active site. Residue Glu334 is part of the active site.

This sequence belongs to the MurB family. Requires FAD as cofactor.

The protein resides in the cytoplasm. It carries out the reaction UDP-N-acetyl-alpha-D-muramate + NADP(+) = UDP-N-acetyl-3-O-(1-carboxyvinyl)-alpha-D-glucosamine + NADPH + H(+). The protein operates within cell wall biogenesis; peptidoglycan biosynthesis. Cell wall formation. The sequence is that of UDP-N-acetylenolpyruvoylglucosamine reductase from Amoebophilus asiaticus (strain 5a2).